Reading from the N-terminus, the 551-residue chain is ATP-dependent RNA helicase MRH4, mitochondrial (551 aa).

The transit peptide at 1–13 directs the protein to the mitochondrion; it reads MPPNLTPRSFNRD. The Q motif signature appears at 43 to 73; sequence RTFDDFGLEEGLVKSLKGLYGEDGKTTPIET. In terms of domain architecture, Helicase ATP-binding spans 85-293; the sequence is ASAPIGSQRV…TTNPFFTKKE (209 aa). Position 98–105 (98–105) interacts with ATP; that stretch reads AETGSGKT. A DEAD box motif is present at residues 242–245; it reads DEAD. Residues 334 to 551 form the Helicase C-terminal domain; that stretch reads TLAEDAKAAK…VGAMGKRVRT (218 aa). A disordered region spans residues 504 to 527; the sequence is LGEGAKNNKGGKGQGPLKKDGKTA.

This sequence belongs to the DEAD box helicase family. MRH4 subfamily.

It localises to the mitochondrion. The catalysed reaction is ATP + H2O = ADP + phosphate + H(+). Functionally, ATP-binding RNA helicase involved in mitochondrial RNA metabolism. Required for maintenance of mitochondrial DNA. In Cryptococcus neoformans var. neoformans serotype D (strain B-3501A) (Filobasidiella neoformans), this protein is ATP-dependent RNA helicase MRH4, mitochondrial (MRH4).